Reading from the N-terminus, the 313-residue chain is tRNA-cytidine(32) 2-sulfurtransferase (313 aa).

A PP-loop motif motif is present at residues 46-51; sequence SGGKDS. Cysteine 121, cysteine 124, and cysteine 212 together coordinate [4Fe-4S] cluster.

Belongs to the TtcA family. As to quaternary structure, homodimer. Requires Mg(2+) as cofactor. [4Fe-4S] cluster is required as a cofactor.

It is found in the cytoplasm. The enzyme catalyses cytidine(32) in tRNA + S-sulfanyl-L-cysteinyl-[cysteine desulfurase] + AH2 + ATP = 2-thiocytidine(32) in tRNA + L-cysteinyl-[cysteine desulfurase] + A + AMP + diphosphate + H(+). The protein operates within tRNA modification. Catalyzes the ATP-dependent 2-thiolation of cytidine in position 32 of tRNA, to form 2-thiocytidine (s(2)C32). The sulfur atoms are provided by the cysteine/cysteine desulfurase (IscS) system. The sequence is that of tRNA-cytidine(32) 2-sulfurtransferase from Nitrosomonas eutropha (strain DSM 101675 / C91 / Nm57).